We begin with the raw amino-acid sequence, 72 residues long: uncharacterized protein (72 aa).

Residues 11-31 form a helical membrane-spanning segment; that stretch reads WCCTVLSAFGVVILSVIAHLF.

The protein localises to the membrane. This is an uncharacterized protein from Saccharomyces cerevisiae (strain ATCC 204508 / S288c) (Baker's yeast).